Here is a 294-residue protein sequence, read N- to C-terminus: MHPRFQTAFAQLADNLQSALEPILADKYFPALLTGEQVSSLKSATGLDEDALAFALLPLAAACARTPLSNFNVGAIARGVSGTWYFGANMEFIGATMQQTVHAEQSAISHAWLSGEKALAAITVNYTPCGHCRQFMNELNSGLDLRIHLPGREAHALRDYLPDAFGPKDLEIKTLLMDEQDHGYALTGDALSQAAIAAANRSHMPYSKSPSGVALECKDGRIFSGSYAENAAFNPTLPPLQGALILLNLKGYDYPDIQRAVLAEKADAPLIQWDATSATLKALGCHSIDRVLLA.

2 consecutive CMP/dCMP-type deaminase domains span residues 48–168 (DEDA…FGPK) and 186–294 (LTGD…VLLA). A substrate-binding site is contributed by 89 to 91 (NME). A Zn(2+)-binding site is contributed by histidine 102. Glutamate 104 (proton donor) is an active-site residue. Zn(2+)-binding residues include cysteine 129 and cysteine 132.

This sequence belongs to the cytidine and deoxycytidylate deaminase family. Homodimer. The cofactor is Zn(2+).

It carries out the reaction cytidine + H2O + H(+) = uridine + NH4(+). It catalyses the reaction 2'-deoxycytidine + H2O + H(+) = 2'-deoxyuridine + NH4(+). Its function is as follows. This enzyme scavenges exogenous and endogenous cytidine and 2'-deoxycytidine for UMP synthesis. The polypeptide is Cytidine deaminase (Escherichia coli (strain K12)).